The following is a 92-amino-acid chain: Small ribosomal subunit protein uS19 (92 aa).

This sequence belongs to the universal ribosomal protein uS19 family.

Its function is as follows. Protein S19 forms a complex with S13 that binds strongly to the 16S ribosomal RNA. The protein is Small ribosomal subunit protein uS19 of Nostoc sp. (strain PCC 7120 / SAG 25.82 / UTEX 2576).